The chain runs to 448 residues: MRSHTATMVDRIEDTSRADREAALADAGHNVFELASDDVAVDLLTDSGTGTMSNDQWAAMLQGDEAYAGSASFEDLAVAAEDVMGFQHIIPAHQGRGAENVLYGAVLSAGDTVLNNAHFDTTRAHVAANDATPVDCPVDGARDPDTDAPFKGNFSVERARRVVDDVGADAVPVVVLTITNNSMAGQPVSIENTREVAAFADDIDATFVIDACRFAENAHFVQQREPGYEHDSVAAIAREQLSYADACVMSGKKDGLVNVGGFVGLHDDGRLHEQCRQRGILYEGFSTYGGMSGRDMAAFAVGLREAVEPPYVAERVAQVQRLADALTDRDVPIYQPAGGHAVYIDANAALPHLPREQFPGQAFVCELYREGGVRAVELGRFAFPDTDRRDLVRLALPRRTYGPDHLDHVADTAAAVCERGTDVTGLEIVSEPELTELRHFSAALQPVA.

Lys253 is modified (N6-(pyridoxal phosphate)lysine).

It belongs to the beta-eliminating lyase family. Pyridoxal 5'-phosphate is required as a cofactor.

The catalysed reaction is L-tryptophan + H2O = indole + pyruvate + NH4(+). It participates in amino-acid degradation; L-tryptophan degradation via pyruvate pathway; indole and pyruvate from L-tryptophan: step 1/1. The sequence is that of Probable tryptophanase from Halobacterium salinarum (strain ATCC 29341 / DSM 671 / R1).